Consider the following 340-residue polypeptide: MNICVNSLYRLSTPQFHSLYSEDVSDEVLALLIGEVENGNQNCIDLLCNLALRNDDLGHKVEKLLFDLFSGKRSGSPDIDKKINQACLVLHQIANNDITKNNTEWKKLHAPSRLLYMAGSATTDLSKKIGIAHKIMGDQFAQTDQEQVGVENLWCSARMLSSDELAAATQGLVQESPFLSVNYPIGLIHPTTKENILSTQLLEKMAQSGLSENEVFLINTGDHWLICLFYKLAEKIKCLIFNTYYDLNENTKQEIIEAAKIAGISESDEVNFIEMNLQNNVPNGCSLFCYHTIQLLSNAGQNDPVTTLREFAEKFLTLSVEEQALFNTQTRRQIYEYSLQ.

The active site involves H223. The Nucleophile role is filled by C285.

The protein belongs to the peptidase C79 family.

It localises to the secreted. It is found in the host cytoplasm. Effector proteins function to alter host cell physiology and promote bacterial survival in host tissues. This protease targets the host cell ubiquitin pathway by acting as a deubiquitinase in infected host cells. This Salmonella choleraesuis (strain SC-B67) protein is Deubiquitinase SseL (sseL).